Consider the following 179-residue polypeptide: Inorganic pyrophosphatase (179 aa).

Substrate contacts are provided by Lys-30, Arg-44, and Tyr-56. Mg(2+) is bound by residues Asp-66, Asp-71, and Asp-103. A substrate-binding site is contributed by Tyr-143.

Belongs to the PPase family. Homohexamer. The cofactor is Mg(2+).

The protein resides in the cytoplasm. The catalysed reaction is diphosphate + H2O = 2 phosphate + H(+). Catalyzes the hydrolysis of inorganic pyrophosphate (PPi) forming two phosphate ions. The protein is Inorganic pyrophosphatase of Wigglesworthia glossinidia brevipalpis.